The following is a 210-amino-acid chain: MPPYTIVYFPVQGRCEAMRMLLADQGQSWKEEVVAMQSWLQGPLKASCLYGQLPKFQDGDLTLYQSNAILRHLGRTLGLYGKDQQEAALVDMVNDGVEDLRCKYVSLIYTNYEAGKEDYVKALPQHLKPFETLLSQNKGGQAFIVGDQISFADYNLLDLLRIHQVLAPSCLDSFPLLSAYVARLNSRPKLKAFLASPEHMNRPINGNGKQ.

Positions proline 2–glycine 81 constitute a GST N-terminal domain. Tyrosine 4 is subject to Phosphotyrosine; by EGFR. Glutathione-binding positions include tyrosine 8, arginine 14, tryptophan 39, lysine 45, and glutamine 52–leucine 53. Threonine 62 is subject to Phosphothreonine. Glutamine 65 to serine 66 provides a ligand contact to glutathione. The 122-residue stretch at aspartate 83–isoleucine 204 folds into the GST C-terminal domain. Residues lysine 103 and lysine 116 each carry the N6-succinyllysine modification. N6-acetyllysine is present on lysine 128.

The protein belongs to the GST superfamily. Pi family. Homodimer. Interacts with CDK5.

It is found in the cytoplasm. The protein localises to the mitochondrion. The protein resides in the nucleus. The enzyme catalyses RX + glutathione = an S-substituted glutathione + a halide anion + H(+). It carries out the reaction prostaglandin J2 + glutathione = prostaglandin J2-S-(R)-glutathione. The catalysed reaction is prostaglandin J2 + glutathione = prostaglandin J2-S-(S)-glutathione. It catalyses the reaction prostaglandin A2 + glutathione = prostaglandin A2-S-(S)-glutathione. The enzyme catalyses 11(S)-hydroxy-14(S),15(S)-epoxy-(5Z,8Z,12E)-eicosatrienoate + glutathione = (11S,15S)-dihydroxy-14(R)-S-glutathionyl-(5Z,8Z,12E)-eicosatrienoate. Its function is as follows. Conjugation of reduced glutathione to a wide number of exogenous and endogenous hydrophobic electrophiles. Involved in the formation of glutathione conjugates of both prostaglandin A2 (PGA2) and prostaglandin J2 (PGJ2). Participates in the formation of novel hepoxilin regioisomers. Negatively regulates CDK5 activity via p25/p35 translocation to prevent neurodegeneration. This Bos taurus (Bovine) protein is Glutathione S-transferase P (GSTP1).